Reading from the N-terminus, the 231-residue chain is Probable glutathione S-transferase (231 aa).

A GST N-terminal domain is found at 4–96 (PNFELYGYFR…YLEEALPTNA (93 aa)). Glutathione-binding positions include Ser14, Gln43, Val57, 80–81 (QS), Gln124, and 128–130 (NLK). Residues 105–227 (NPVARAHVRT…HWQKQEDTPE (123 aa)) enclose the GST C-terminal domain.

The protein belongs to the GST superfamily. Zeta family. In terms of assembly, homodimer.

The catalysed reaction is RX + glutathione = an S-substituted glutathione + a halide anion + H(+). Probable glutathione S-transferase. In Coccidioides immitis (strain RS) (Valley fever fungus), this protein is Probable glutathione S-transferase.